Here is an 828-residue protein sequence, read N- to C-terminus: Outer membrane usher protein MrkC (828 aa).

The N-terminal stretch at 1-18 (MKQRSICPGRLSTAIAVA) is a signal peptide. A disulfide bridge connects residues Cys-813 and Cys-827.

Belongs to the fimbrial export usher family.

The protein resides in the cell outer membrane. In terms of biological role, involved in the export and assembly of the type 3 fimbrial subunit (MrkA). In Klebsiella pneumoniae, this protein is Outer membrane usher protein MrkC (mrkC).